A 245-amino-acid chain; its full sequence is Uridylate kinase (245 aa).

ATP is bound at residue 15-18; it reads KLSG. The tract at residues 23 to 28 is involved in allosteric activation by GTP; that stretch reads GEEGFG. Residue G57 coordinates UMP. ATP contacts are provided by G58 and R62. Residues D77 and 138-145 each bind UMP; that span reads TGNPFCTT. ATP contacts are provided by T165, Y171, and D174.

It belongs to the UMP kinase family. Homohexamer.

The protein resides in the cytoplasm. The catalysed reaction is UMP + ATP = UDP + ADP. Its pathway is pyrimidine metabolism; CTP biosynthesis via de novo pathway; UDP from UMP (UMPK route): step 1/1. Its activity is regulated as follows. Allosterically activated by GTP. Inhibited by UTP. Functionally, catalyzes the reversible phosphorylation of UMP to UDP. This Shewanella putrefaciens (strain CN-32 / ATCC BAA-453) protein is Uridylate kinase.